A 294-amino-acid chain; its full sequence is 4-hydroxy-tetrahydrodipicolinate synthase (294 aa).

Thr-45 contributes to the pyruvate binding site. The active-site Proton donor/acceptor is Tyr-133. Residue Lys-161 is the Schiff-base intermediate with substrate of the active site. Ile-203 provides a ligand contact to pyruvate.

Belongs to the DapA family. In terms of assembly, homotetramer; dimer of dimers.

It is found in the cytoplasm. It catalyses the reaction L-aspartate 4-semialdehyde + pyruvate = (2S,4S)-4-hydroxy-2,3,4,5-tetrahydrodipicolinate + H2O + H(+). It participates in amino-acid biosynthesis; L-lysine biosynthesis via DAP pathway; (S)-tetrahydrodipicolinate from L-aspartate: step 3/4. Functionally, catalyzes the condensation of (S)-aspartate-beta-semialdehyde [(S)-ASA] and pyruvate to 4-hydroxy-tetrahydrodipicolinate (HTPA). This Alcanivorax borkumensis (strain ATCC 700651 / DSM 11573 / NCIMB 13689 / SK2) protein is 4-hydroxy-tetrahydrodipicolinate synthase.